We begin with the raw amino-acid sequence, 169 residues long: Transcription antitermination protein NusB (169 aa).

Residues 147–169 (RGLIDQSFSRPQKPESEATEIEE) form a disordered region.

This sequence belongs to the NusB family.

Functionally, involved in transcription antitermination. Required for transcription of ribosomal RNA (rRNA) genes. Binds specifically to the boxA antiterminator sequence of the ribosomal RNA (rrn) operons. The polypeptide is Transcription antitermination protein NusB (Chlorobium chlorochromatii (strain CaD3)).